The primary structure comprises 757 residues: LPS-assembly protein LptD (757 aa).

The N-terminal stretch at 1 to 21 (MRRLIPIAITGSLLWGAAVQA) is a signal peptide.

It belongs to the LptD family. Component of the lipopolysaccharide transport and assembly complex. Interacts with LptE and LptA.

The protein resides in the cell outer membrane. Its function is as follows. Together with LptE, is involved in the assembly of lipopolysaccharide (LPS) at the surface of the outer membrane. The polypeptide is LPS-assembly protein LptD (Alkalilimnicola ehrlichii (strain ATCC BAA-1101 / DSM 17681 / MLHE-1)).